A 209-amino-acid chain; its full sequence is MSKTAGVGRLGGARAADAAQQQQLAAGDAAVARAARPIETLLRAAPLVLCVAAMTLMLRDQQSNEYGTVAYSDLGGFKYLVYANGLCAAYSLASAFYTAVPRPATVSRSWVVFLLDQVFTYLILAAGAAAAELLYLAYNGDKEVTWSEACGVFGSFCRQARISVAITFGAVLCFILLSLLSSYRLFSAYEAPPPSALGSKGVEIAAYPR.

At 1 to 37 (MSKTAGVGRLGGARAADAAQQQQLAAGDAAVARAARP) the chain is on the cytoplasmic side. A helical membrane pass occupies residues 38 to 58 (IETLLRAAPLVLCVAAMTLML). At 59–79 (RDQQSNEYGTVAYSDLGGFKY) the chain is on the extracellular side. A helical membrane pass occupies residues 80–100 (LVYANGLCAAYSLASAFYTAV). The Cytoplasmic portion of the chain corresponds to 101 to 109 (PRPATVSRS). A helical transmembrane segment spans residues 110–130 (WVVFLLDQVFTYLILAAGAAA). Residues 131-161 (AELLYLAYNGDKEVTWSEACGVFGSFCRQAR) lie on the Extracellular side of the membrane. A helical transmembrane segment spans residues 162 to 182 (ISVAITFGAVLCFILLSLLSS). The Cytoplasmic portion of the chain corresponds to 183-209 (YRLFSAYEAPPPSALGSKGVEIAAYPR).

The protein belongs to the Casparian strip membrane proteins (CASP) family. Homodimer and heterodimers.

It localises to the cell membrane. The chain is CASP-like protein 2A2 from Zea mays (Maize).